A 232-amino-acid chain; its full sequence is Fibrillarin-like rRNA/tRNA 2'-O-methyltransferase (232 aa).

S-adenosyl-L-methionine is bound by residues 89 to 90 (TT), 108 to 109 (EF), 133 to 134 (DA), and 153 to 156 (DIAQ).

Belongs to the methyltransferase superfamily. Fibrillarin family. In terms of assembly, interacts with nop5. Component of box C/D small ribonucleoprotein (sRNP) particles that contain rpl7ae, FlpA and nop5, plus a guide RNA.

Involved in pre-rRNA and tRNA processing. Utilizes the methyl donor S-adenosyl-L-methionine to catalyze the site-specific 2'-hydroxyl methylation of ribose moieties in rRNA and tRNA. Site specificity is provided by a guide RNA that base pairs with the substrate. Methylation occurs at a characteristic distance from the sequence involved in base pairing with the guide RNA. The sequence is that of Fibrillarin-like rRNA/tRNA 2'-O-methyltransferase from Saccharolobus islandicus (strain L.S.2.15 / Lassen #1) (Sulfolobus islandicus).